The following is a 262-amino-acid chain: Acyl-coenzyme A diphosphatase FITM2 (262 aa).

At 1 to 23 (MEHLERCEWLLRGTLVRAAVRRY) the chain is on the cytoplasmic side. A helical transmembrane segment spans residues 24–44 (LPWALVASMLAGSLLKELSPL). Residues 45 to 57 (PESYLSNKRNVLN) lie on the Lumenal side of the membrane. The helical transmembrane segment at 58 to 78 (VYFVKVAWAWTFCLLLPFIAL) threads the bilayer. Residues 79–93 (TNYHLTGKAGLVLRR) are Cytoplasmic-facing. A helical membrane pass occupies residues 94–114 (LSTLLVGTAIWYICTSIFSNI). The Lumenal segment spans residues 115-145 (EHYTGSCYQSPALEGVRKEHQSKQQCHQEGG). The helical transmembrane segment at 146-166 (FWHGFDISGHSFLLTFCALMI) threads the bilayer. Residue His-155 is part of the active site. Topologically, residues 167-190 (VEEMSVLHEVKTDRSHCLHTAITT) are cytoplasmic. Residues 191 to 211 (LVVALGILTFIWVLMFLCTAV) form a helical membrane-spanning segment. Residues 212–218 (YFHNLSQ) lie on the Lumenal side of the membrane. Residue His-214 is part of the active site. The chain crosses the membrane as a helical span at residues 219-239 (KVFGTLFGLLSWYGTYGFWYP). Over 240 to 262 (KAFSPGLPPQSCSLNLKQDSYKK) the chain is Cytoplasmic.

It belongs to the FIT family. FIT2 subfamily. Widely expressed.

The protein resides in the endoplasmic reticulum membrane. The catalysed reaction is an acyl-CoA + H2O = an acyl-4'-phosphopantetheine + adenosine 3',5'-bisphosphate + 2 H(+). It catalyses the reaction (9Z)-octadecenoyl-CoA + H2O = S-(9Z-octadecenoyl)-4'-phosphopantetheine + adenosine 3',5'-bisphosphate + 2 H(+). The enzyme catalyses (5Z,8Z,11Z,14Z)-eicosatetraenoyl-CoA + H2O = S-(5Z,8Z,11Z,14Z-eicosatetraenoyl)-4'-phosphopantetheine + adenosine 3',5'-bisphosphate + 2 H(+). It carries out the reaction hexadecanoyl-CoA + H2O = S-hexadecanoyl-4'-phosphopantetheine + adenosine 3',5'-bisphosphate + 2 H(+). Its function is as follows. Fatty acyl-coenzyme A (CoA) diphosphatase that hydrolyzes fatty acyl-CoA to yield acyl-4'-phosphopantetheine and adenosine 3',5'-bisphosphate. Preferentially hydrolyzes unsaturated long-chain acyl-CoA substrates such as oleoyl-CoA/(9Z)-octadecenoyl-CoA and arachidonoyl-CoA/(5Z,8Z,11Z,14Z)-eicosatetraenoyl-CoA in the endoplasmic reticulum (ER) lumen. This catalytic activity is required for maintaining ER structure and for lipid droplets (LDs) biogenesis, which are lipid storage organelles involved in maintaining lipid and energy homeostasis. Directly binds to diacylglycerol (DAGs) and triacylglycerol, which is also important for LD biogenesis. May support directional budding of nacent LDs from the ER into the cytosol by reducing DAG levels at sites of LD formation. Plays a role in the regulation of cell morphology and cytoskeletal organization. The polypeptide is Acyl-coenzyme A diphosphatase FITM2 (Homo sapiens (Human)).